The chain runs to 490 residues: Cytochrome P450 2C50 (490 aa).

Phosphoserine is present on Ser-127. N6-acetyllysine occurs at positions 249 and 375. Cys-435 is a binding site for heme.

It belongs to the cytochrome P450 family. Heme is required as a cofactor. As to expression, expressed in heart and liver.

The protein resides in the endoplasmic reticulum membrane. It is found in the microsome membrane. The catalysed reaction is an organic molecule + reduced [NADPH--hemoprotein reductase] + O2 = an alcohol + oxidized [NADPH--hemoprotein reductase] + H2O + H(+). Metabolizes arachidonic acid to several midchain and omega-terminal hydroxyeicosatetraenoic acids (HETE). The sequence is that of Cytochrome P450 2C50 from Mus musculus (Mouse).